Here is a 149-residue protein sequence, read N- to C-terminus: Probable ubiquitin-conjugating enzyme E2 W (149 aa).

The UBC core domain occupies 4-149; the sequence is RYAKRLQKEL…VRWMFHDDTV (146 aa). The active-site Glycyl thioester intermediate is Cys-88.

It belongs to the ubiquitin-conjugating enzyme family.

It catalyses the reaction S-ubiquitinyl-[E1 ubiquitin-activating enzyme]-L-cysteine + [E2 ubiquitin-conjugating enzyme]-L-cysteine = [E1 ubiquitin-activating enzyme]-L-cysteine + S-ubiquitinyl-[E2 ubiquitin-conjugating enzyme]-L-cysteine.. It carries out the reaction S-ubiquitinyl-[E1 ubiquitin-activating enzyme]-L-cysteine + [acceptor protein]-N-terminal-amino acid = [E1 ubiquitin-activating enzyme]-L-cysteine + N-terminal-ubiquitinyl-[acceptor protein].. Its pathway is protein modification; protein ubiquitination. Its function is as follows. Catalyzes the covalent attachment of ubiquitin to other proteins. In Dictyostelium discoideum (Social amoeba), this protein is Probable ubiquitin-conjugating enzyme E2 W (ube2w).